The primary structure comprises 387 residues: Mitogen-activated protein kinase homolog MMK1 (387 aa).

One can recognise a Protein kinase domain in the interval 55-340 (KPPIMPIGKG…VEDALAHPYL (286 aa)). ATP-binding positions include 61–69 (IGKGAYGIV) and K84. Residue D181 is the Proton acceptor of the active site. T213 is subject to Phosphothreonine. The short motif at 213–215 (TEY) is the TXY element. At Y215 the chain carries Phosphotyrosine.

The protein belongs to the protein kinase superfamily. CMGC Ser/Thr protein kinase family. MAP kinase subfamily. Requires Mg(2+) as cofactor. In terms of processing, dually phosphorylated on Thr-213 and Tyr-215, which activates the enzyme. Autophosphorylated. Roots and stems.

The enzyme catalyses L-seryl-[protein] + ATP = O-phospho-L-seryl-[protein] + ADP + H(+). The catalysed reaction is L-threonyl-[protein] + ATP = O-phospho-L-threonyl-[protein] + ADP + H(+). Its activity is regulated as follows. Activated by tyrosine and threonine phosphorylation. Functionally, may play a role in the mitogenic induction of symbiotic root nodules on Alfalfa by Rhizobium signal molecules. The polypeptide is Mitogen-activated protein kinase homolog MMK1 (MMK1) (Medicago sativa (Alfalfa)).